A 324-amino-acid polypeptide reads, in one-letter code: Quinolinate synthase (324 aa).

2 residues coordinate iminosuccinate: His39 and Ser56. Cys101 serves as a coordination point for [4Fe-4S] cluster. Residues 127-129 (YIN) and Ser144 contribute to the iminosuccinate site. Cys187 is a [4Fe-4S] cluster binding site. Residues 213-215 (HPE) and Thr230 contribute to the iminosuccinate site. Cys280 contacts [4Fe-4S] cluster.

Belongs to the quinolinate synthase family. Type 2 subfamily. Requires [4Fe-4S] cluster as cofactor.

Its subcellular location is the cytoplasm. It catalyses the reaction iminosuccinate + dihydroxyacetone phosphate = quinolinate + phosphate + 2 H2O + H(+). It functions in the pathway cofactor biosynthesis; NAD(+) biosynthesis; quinolinate from iminoaspartate: step 1/1. In terms of biological role, catalyzes the condensation of iminoaspartate with dihydroxyacetone phosphate to form quinolinate. The polypeptide is Quinolinate synthase (Trichormus variabilis (strain ATCC 29413 / PCC 7937) (Anabaena variabilis)).